Consider the following 153-residue polypeptide: MIREIRKVGDPILKTKAKKVEKIDEKVKELARDMIETMKFCNGVGLAAPQVGESLRIIVVDYEDNPIVLINPEIIEMSGEELDYEGCLSVPGVEVPVKRAERIVFKAQDLDGRTKKYRAKGLLARVVQHEVDHLDGMLILDRAVEETLKTEEK.

Fe cation contacts are provided by C87 and H129. The active site involves E130. H133 contacts Fe cation.

The protein belongs to the polypeptide deformylase family. Fe(2+) serves as cofactor.

It carries out the reaction N-terminal N-formyl-L-methionyl-[peptide] + H2O = N-terminal L-methionyl-[peptide] + formate. Functionally, removes the formyl group from the N-terminal Met of newly synthesized proteins. Requires at least a dipeptide for an efficient rate of reaction. N-terminal L-methionine is a prerequisite for activity but the enzyme has broad specificity at other positions. This Dictyoglomus thermophilum (strain ATCC 35947 / DSM 3960 / H-6-12) protein is Peptide deformylase.